A 392-amino-acid polypeptide reads, in one-letter code: Telomere-binding protein subunit beta (392 aa).

Residues 234–392 are disordered; that stretch reads QQVESVQVQP…ASKASKRSKK (159 aa). A compositionally biased stretch (basic residues) spans 247–256; sequence GGAKGKKKAA. The segment covering 257–268 has biased composition (low complexity); the sequence is TKSATKKTVAAK. Residues 269 to 284 are compositionally biased toward basic and acidic residues; the sequence is KTAESADVRKSVDKIV. A compositionally biased stretch (polar residues) spans 328-343; sequence SPSGKKSTKTTDQMTM. Residues 374–384 are compositionally biased toward low complexity; the sequence is GKASATSGKAS.

As to quaternary structure, heterodimer of an alpha and a beta subunit.

It is found in the nucleus. It localises to the chromosome. The protein localises to the telomere. Its function is as follows. May function as protective capping of the single-stranded telomeric overhang. May also participate in telomere length regulation during DNA replication. This Stylonychia mytilus (Ciliate) protein is Telomere-binding protein subunit beta (STY43).